A 311-amino-acid polypeptide reads, in one-letter code: Malate dehydrogenase (311 aa).

10-15 is a binding site for NAD(+); that stretch reads GAGHTG. Arginine 85 and arginine 91 together coordinate substrate. Residues asparagine 98 and 121–123 each bind NAD(+); that span reads LTN. Residues asparagine 123 and arginine 154 each coordinate substrate. Residue histidine 178 is the Proton acceptor of the active site.

It belongs to the LDH/MDH superfamily. MDH type 3 family.

The enzyme catalyses (S)-malate + NAD(+) = oxaloacetate + NADH + H(+). Functionally, catalyzes the reversible oxidation of malate to oxaloacetate. This is Malate dehydrogenase from Staphylococcus carnosus (strain TM300).